Consider the following 883-residue polypeptide: HTH-type transcriptional regulator AlkS (883 aa).

The region spanning E816 to G881 is the HTH luxR-type domain. The H-T-H motif DNA-binding region spans N840 to R859.

Its pathway is hydrocarbon metabolism; alkane degradation. Its function is as follows. May act as a transcriptional regulator of AlkB. The sequence is that of HTH-type transcriptional regulator AlkS (alkS) from Pseudomonas putida (Arthrobacter siderocapsulatus).